A 277-amino-acid chain; its full sequence is Small ribosomal subunit protein uS3 (277 aa).

In terms of domain architecture, KH type-2 spans 38-106 (IRRLLATGLE…QVQLNILEVK (69 aa)). Residues 217 to 277 (AGVEAGRGAP…SAPSAETTES (61 aa)) form a disordered region. Over residues 225–235 (APDRPRRERPA) the composition is skewed to basic and acidic residues. Residues 242–261 (SGSSGTTATSTEAGRAAAET) show a composition bias toward low complexity.

This sequence belongs to the universal ribosomal protein uS3 family. In terms of assembly, part of the 30S ribosomal subunit. Forms a tight complex with proteins S10 and S14.

In terms of biological role, binds the lower part of the 30S subunit head. Binds mRNA in the 70S ribosome, positioning it for translation. In Mycobacteroides abscessus (strain ATCC 19977 / DSM 44196 / CCUG 20993 / CIP 104536 / JCM 13569 / NCTC 13031 / TMC 1543 / L948) (Mycobacterium abscessus), this protein is Small ribosomal subunit protein uS3.